Consider the following 477-residue polypeptide: Transmembrane and coiled-coil domain protein 3 (477 aa).

Residues 1–24 (MPGSDTALTVDRTYSDPGRHHRCK) are disordered. A Phosphoserine modification is found at S46. Coiled coils occupy residues 63 to 83 (KVKL…EQIK) and 112 to 149 (KQVF…NGVT). The tract at residues 234-280 (ASPRAYGGSATIVNKPKYGSDDECSSGTSGSADSNGNQSFGAGGTST) is disordered. S253 bears the Phosphoserine mark. The span at 258 to 280 (SSGTSGSADSNGNQSFGAGGTST) shows a compositional bias: polar residues. Positions 284-398 (QGKIAKIMEE…KLELHQQEQQ (115 aa)) form a coiled coil. The next 2 membrane-spanning stretches (helical) occupy residues 409-429 (VLLG…LVCV) and 450-470 (FFAV…LCAI).

The protein belongs to the TEX28 family. May form homodimers and heterodimers with TMCC2 or TMCC3 via the coiled-coil domains. Interacts with ribosomal proteins RPL4 and RPS6.

It localises to the endoplasmic reticulum membrane. The sequence is that of Transmembrane and coiled-coil domain protein 3 from Mus musculus (Mouse).